Here is a 912-residue protein sequence, read N- to C-terminus: Protein translocase subunit SecA (912 aa).

Residues Q87, G105 to T109, and D510 contribute to the ATP site. The disordered stretch occupies residues K854–S912. Zn(2+)-binding residues include C896, C898, C907, and C908.

The protein belongs to the SecA family. In terms of assembly, monomer and homodimer. Part of the essential Sec protein translocation apparatus which comprises SecA, SecYEG and auxiliary proteins SecDF-YajC and YidC. Requires Zn(2+) as cofactor.

It is found in the cell inner membrane. The protein localises to the cytoplasm. The enzyme catalyses ATP + H2O + cellular proteinSide 1 = ADP + phosphate + cellular proteinSide 2.. Part of the Sec protein translocase complex. Interacts with the SecYEG preprotein conducting channel. Has a central role in coupling the hydrolysis of ATP to the transfer of proteins into and across the cell membrane, serving both as a receptor for the preprotein-SecB complex and as an ATP-driven molecular motor driving the stepwise translocation of polypeptide chains across the membrane. In Marinobacter nauticus (strain ATCC 700491 / DSM 11845 / VT8) (Marinobacter aquaeolei), this protein is Protein translocase subunit SecA.